The sequence spans 224 residues: Artemin (224 aa).

A signal peptide spans 1-39 (MELGLGEPTALSHCLRPRWQPALWPTLAALALLSSVTEA). The propeptide occupies 40–111 (SLDPMSRSPA…AALRGARAAR (72 aa)). Residues 41–124 (LDPMSRSPAS…RSSRARATDA (84 aa)) form a disordered region. Residues 80–95 (RPPPQSPQPAPPPPGP) show a composition bias toward pro residues. Residues 96–116 (ALQSPPAALRGARAARAGTRS) are compositionally biased toward low complexity. Cystine bridges form between cysteine 127–cysteine 192, cysteine 154–cysteine 220, and cysteine 158–cysteine 222. An N-linked (GlcNAc...) asparagine glycan is attached at asparagine 206.

Belongs to the TGF-beta family. GDNF subfamily. As to quaternary structure, homodimer; disulfide-linked. Interacts with GFRA3 coreceptor and RET: forms a 2:2:2 ternary complex composed of ARTN ligand, GFRA3 and RET receptor. Cochlea. Expressed at higher level in sesorineural epithelium than in the modiolus region or substantia nigra.

Its subcellular location is the secreted. Its function is as follows. Growth factor that supports the survival of sensory and sympathetic peripheral neurons in culture and also supports the survival of dopaminergic neurons of the ventral mid-brain. Acts by binding to its coreceptor, GFRA3, leading to autophosphorylation and activation of the RET receptor. Strong attractant of gut hematopoietic cells thus promoting the formation Peyer's patch-like structures, a major component of the gut-associated lymphoid tissue. This Rattus norvegicus (Rat) protein is Artemin (Artn).